The sequence spans 107 residues: Large ribosomal subunit protein uL24 (107 aa).

It belongs to the universal ribosomal protein uL24 family. Part of the 50S ribosomal subunit.

In terms of biological role, one of two assembly initiator proteins, it binds directly to the 5'-end of the 23S rRNA, where it nucleates assembly of the 50S subunit. Its function is as follows. One of the proteins that surrounds the polypeptide exit tunnel on the outside of the subunit. The sequence is that of Large ribosomal subunit protein uL24 from Kosmotoga olearia (strain ATCC BAA-1733 / DSM 21960 / TBF 19.5.1).